Reading from the N-terminus, the 196-residue chain is GTP cyclohydrolase-2 (196 aa).

GTP is bound at residue Arg49 to Glu53. Residues Cys54, Cys65, and Cys67 each contribute to the Zn(2+) site. Residues Gln70, Glu92 to Arg94, and Thr114 contribute to the GTP site. Asp126 (proton acceptor) is an active-site residue. The Nucleophile role is filled by Arg128. The GTP site is built by Thr149 and Lys154.

This sequence belongs to the GTP cyclohydrolase II family. Homodimer. Zn(2+) is required as a cofactor.

It catalyses the reaction GTP + 4 H2O = 2,5-diamino-6-hydroxy-4-(5-phosphoribosylamino)-pyrimidine + formate + 2 phosphate + 3 H(+). It functions in the pathway cofactor biosynthesis; riboflavin biosynthesis; 5-amino-6-(D-ribitylamino)uracil from GTP: step 1/4. Its function is as follows. Catalyzes the conversion of GTP to 2,5-diamino-6-ribosylamino-4(3H)-pyrimidinone 5'-phosphate (DARP), formate and pyrophosphate. This Shigella dysenteriae serotype 1 (strain Sd197) protein is GTP cyclohydrolase-2.